A 185-amino-acid polypeptide reads, in one-letter code: Meiotically up-regulated gene 5 protein (185 aa).

It is found in the cytoplasm. Required for correct meiotic chromosome segregation. This is Meiotically up-regulated gene 5 protein (mug5) from Schizosaccharomyces pombe (strain 972 / ATCC 24843) (Fission yeast).